A 371-amino-acid chain; its full sequence is F-box protein At2g26850 (371 aa).

Positions 59–105 (KMSILDLPDLPLDCILELLPPSELCTMARVCSSLRERCVSDHLWEKH) constitute an F-box domain.

The chain is F-box protein At2g26850 from Arabidopsis thaliana (Mouse-ear cress).